Here is a 928-residue protein sequence, read N- to C-terminus: MRIKETLNLGKTAFPMRAGLPNREIDWQKGWADNNLYQQRQKLNEGKPSFVLHDGPPFANGNIHMGHALNKTSKDIIVRYKSMNGFRAPFVPGWDTHGLPIEQALAKKGIKRKEMSLVDYRKLCYDYAMEQVNTQRQDFKRLGISADWDNPYITLTADFEAEEIRVFGEMAKKGYIYKGKKPVYWSPSSESTLAEAEIEYKDIKSPSMYVAFNVVDGKDLLDADTKFIIWTTTPWTIPANLGIAVNPAFDYVQVLADGQKYVVAAERLNKMTDLLGWESVEILKTFKGADMELMTARHPLYDRESLVILGNHVTLETGTGLVHTAPGHGEDDYNAGTKYKLPVLSVVDSKGIMTEDAPGFEGVYYDKANPMVTEALEKNGSLLKLDFFTHSYPHDWRTKKPVIFRATAQWFASIDAFRDQILAQIEKVEFMPEWGKTRLYNMIRDRGDWVISRQRAWGVPLPIFYAEDGTEIITPETIERVAQLFAEHGSNVWFEWDAKDLLPAGFTHPGSPNGEFTKEKDIMDVWFDSGSSHQAVLAARDELTYPADLILEGSDQYRGWFNSSLITSVAVGEVSPYKAVISQGFVLDGNGRKMSKSLGNTILPEKIIKQMGADIVRLWVASVDASSDVKVTMENFQQVSEAYRKIRNTMRFMIANTTDFDPAKDTVDYAELGSVDKFMLVRLNAIIESCKAAYDAYDFATVYKTINMFLTNELSAFYLDFAKDVVYIDGQNDAPRRNMQTVFYAVAVALTKLLTPILPHTAEEIWSYLHEPEEFVQLAEMPEVAHFAGEEDLVATWNAFMGIRDDVLKALETARMDKVIGKSLEAAVTLYPNEANAALLASLDADVKQLLIVSQLTIADQAVEAPAEATQFDGVAVSVAHAEGDVCDRCRMIKTDVGSDDKFPMLCARCAAIVTANYPEAVAEGLEK.

A 'HIGH' region motif is present at residues 57–67 (PFANGNIHMGH). E552 is an L-isoleucyl-5'-AMP binding site. A 'KMSKS' region motif is present at residues 593–597 (KMSKS). K596 contributes to the ATP binding site. Positions 887, 890, 907, and 910 each coordinate Zn(2+).

Belongs to the class-I aminoacyl-tRNA synthetase family. IleS type 1 subfamily. As to quaternary structure, monomer. Zn(2+) is required as a cofactor.

The protein resides in the cytoplasm. The enzyme catalyses tRNA(Ile) + L-isoleucine + ATP = L-isoleucyl-tRNA(Ile) + AMP + diphosphate. Its function is as follows. Catalyzes the attachment of isoleucine to tRNA(Ile). As IleRS can inadvertently accommodate and process structurally similar amino acids such as valine, to avoid such errors it has two additional distinct tRNA(Ile)-dependent editing activities. One activity is designated as 'pretransfer' editing and involves the hydrolysis of activated Val-AMP. The other activity is designated 'posttransfer' editing and involves deacylation of mischarged Val-tRNA(Ile). This is Isoleucine--tRNA ligase from Latilactobacillus sakei subsp. sakei (strain 23K) (Lactobacillus sakei subsp. sakei).